The primary structure comprises 620 residues: Cilia- and flagella-associated protein 52 (620 aa).

WD repeat units lie at residues 62-106 (GHGN…LIAR), 109-150 (LHKG…AICG), 156-195 (LNVGNATSVVFSRCRDEMFVTAGNGTIRVWELDLPNRKIW), 288-327 (QLQGGITSITLRGEGHQFFVGTEESHIYRVNFTDFKETLI), 330-369 (CHFEAVQDIVFPFGTAELFATCAKKDIRVWHTMSKRELLR), 372-411 (VPNMTCHGIDFMRDGKSIISAWDDGKIRAFAPESGRLMYT), 415-454 (AHRIGVTAIATTSDCKRIISGGGEGEVRVWQVGCQTQKLE), 459-498 (EHKSSVSCIRVKKNNEECVTASTDGTCIIWDLVRLRRNQM), 500-541 (LANT…RELE), 543-582 (SLSGSINGMDITQEGGHFVTGGHDHLVKVWDYNEGEVTHV), and 585-620 (GHSGNIMAMRISPGNQYIVSVSADGAILRWKYPFAS).

Belongs to the CFAP52 family. Microtubule inner protein component of sperm flagellar doublet microtubules. Interacts with BRCA2. Interacts with the CCT chaperonin complex. Interacts with HSP70. Interacts with AK8. Interacts with CFAP45. Interacts with DNAI1. Interacts with IQDC.

It localises to the cytoplasm. The protein localises to the cytoskeleton. Its subcellular location is the cilium axoneme. The protein resides in the flagellum axoneme. Microtubule inner protein (MIP) part of the dynein-decorated doublet microtubules (DMTs) in cilia axoneme. Important for proper ciliary and flagellar beating. May act in cooperation with CFAP45 and axonemal dynein subunit DNAH11. May play a role in cell growth and/or survival. The chain is Cilia- and flagella-associated protein 52 from Mus musculus (Mouse).